A 189-amino-acid chain; its full sequence is Shikimate kinase (189 aa).

11–16 (GTGKSA) contacts ATP. Ser15 is a binding site for Mg(2+). Substrate-binding residues include Asp33, Arg57, and Gly79. An ATP-binding site is contributed by Arg117. Arg135 is a substrate binding site.

Belongs to the shikimate kinase family. As to quaternary structure, monomer. Mg(2+) is required as a cofactor.

It is found in the cytoplasm. The catalysed reaction is shikimate + ATP = 3-phosphoshikimate + ADP + H(+). It participates in metabolic intermediate biosynthesis; chorismate biosynthesis; chorismate from D-erythrose 4-phosphate and phosphoenolpyruvate: step 5/7. In terms of biological role, catalyzes the specific phosphorylation of the 3-hydroxyl group of shikimic acid using ATP as a cosubstrate. This is Shikimate kinase from Desulforudis audaxviator (strain MP104C).